Here is a 130-residue protein sequence, read N- to C-terminus: Small ribosomal subunit protein uS9 (130 aa).

The protein belongs to the universal ribosomal protein uS9 family.

The sequence is that of Small ribosomal subunit protein uS9 from Aliivibrio salmonicida (strain LFI1238) (Vibrio salmonicida (strain LFI1238)).